The chain runs to 84 residues: MTDKIRTLQGRVVSDKMEKSIVVAIERMVKHPVYGKFIKRTTKLHVHDENNECGIGDKVEIRECRPLSKTKSWTLVRVVEKAVL.

It belongs to the universal ribosomal protein uS17 family. In terms of assembly, part of the 30S ribosomal subunit.

Its function is as follows. One of the primary rRNA binding proteins, it binds specifically to the 5'-end of 16S ribosomal RNA. This Klebsiella pneumoniae subsp. pneumoniae (strain ATCC 700721 / MGH 78578) protein is Small ribosomal subunit protein uS17.